The primary structure comprises 326 residues: Tetraacyldisaccharide 4'-kinase (326 aa).

53 to 60 (SVGGNGKT) lines the ATP pocket.

It belongs to the LpxK family.

It carries out the reaction a lipid A disaccharide + ATP = a lipid IVA + ADP + H(+). It functions in the pathway glycolipid biosynthesis; lipid IV(A) biosynthesis; lipid IV(A) from (3R)-3-hydroxytetradecanoyl-[acyl-carrier-protein] and UDP-N-acetyl-alpha-D-glucosamine: step 6/6. Functionally, transfers the gamma-phosphate of ATP to the 4'-position of a tetraacyldisaccharide 1-phosphate intermediate (termed DS-1-P) to form tetraacyldisaccharide 1,4'-bis-phosphate (lipid IVA). The sequence is that of Tetraacyldisaccharide 4'-kinase from Actinobacillus pleuropneumoniae serotype 5b (strain L20).